Consider the following 473-residue polypeptide: Photosystem II CP43 reaction center protein (473 aa).

A propeptide spanning residues 1-14 (MKNLYSLRRFYHVE) is cleaved from the precursor. N-acetylthreonine is present on threonine 15. A Phosphothreonine modification is found at threonine 15. 5 helical membrane-spanning segments follow: residues 69–93 (LFEVAHFVPEKPMYEQGLILLPHLA), 134–155 (LIGPETLEESFPFFGYVWKDKN), 178–200 (KARYLGGVYDTWAPGGGDVRVIT), 255–275 (KPFGWARRAFVWSGEAYLSYS), and 291–312 (WFNNTVYPSEFYGPTGPEASQA). Glutamate 367 is a binding site for [CaMn4O5] cluster. Residues 447–471 (RARAAAAGFEKGIDRDTEPTLFMRP) traverse the membrane as a helical segment.

It belongs to the PsbB/PsbC family. PsbC subfamily. In terms of assembly, PSII is composed of 1 copy each of membrane proteins PsbA, PsbB, PsbC, PsbD, PsbE, PsbF, PsbH, PsbI, PsbJ, PsbK, PsbL, PsbM, PsbT, PsbX, PsbY, PsbZ, Psb30/Ycf12, at least 3 peripheral proteins of the oxygen-evolving complex and a large number of cofactors. It forms dimeric complexes. It depends on Binds multiple chlorophylls and provides some of the ligands for the Ca-4Mn-5O cluster of the oxygen-evolving complex. It may also provide a ligand for a Cl- that is required for oxygen evolution. PSII binds additional chlorophylls, carotenoids and specific lipids. as a cofactor.

It is found in the plastid. It localises to the chloroplast thylakoid membrane. Its function is as follows. One of the components of the core complex of photosystem II (PSII). It binds chlorophyll and helps catalyze the primary light-induced photochemical processes of PSII. PSII is a light-driven water:plastoquinone oxidoreductase, using light energy to abstract electrons from H(2)O, generating O(2) and a proton gradient subsequently used for ATP formation. The chain is Photosystem II CP43 reaction center protein from Nephroselmis olivacea (Green alga).